An 864-amino-acid chain; its full sequence is MYMARCGPKNNVLCFPFQLSFLFSKRLINKRFKYTLQTEDEKNMMGSLSKNKIITPEDVEFKLAQLREFSNTLKERIHNTKSVNSDGHQSNSIAPISEDSRNVNVTKTSSVPNEEKSKNLSDLIHSSFLEKMDHLVPKVIRERVADDDILAKNLFDRSHSNWAPVIDRLYVSEKRFMDIDSREFSVWLNGTVKYLPFHSILHLDEMLLEQINGDVVKFNTHMYECIFNNLGNLKPTNFNQDGTNDKVILKMKELLERYDKALKITEERINKKEGFPSKVPKMTQAILNNCLKYSTKCSSFHDMDYFITKFRDDYGITPNKQNLTTVIQFYSRKEMTKQAWNTFDTMKFLSTKHFPDICTYNTMLRICEKERNFPKALDLFQEIQDHNIKPTTNTYIMMARVLASSSSNAVVSEGKSDSLRLLGWKYLHELEDKNLYRHKKDDLNLFLAMMALAAFDGDIELSRALYYLFIAKKYKTLCANWKGNILVDQDTIWKSTLMPEMLNYLMLAYARFDPRNLPVLSGYEKGIELRRKFLREFDSSMRLDDTDKLVKFKLPFLPISDLNSEAQVLAESNAIWSFNMENGGTRNTLTSSNEAALEDIKKYRQLLDSFAQEAEDFNEFKFKVMYEVTKMQRESINVNVFNKISLHTYLSIPINLKQQKEFLRRLTFFTFQQHEFEAVIKRLYEGYRNIPSSHTRDQNSISTEAISVSKPETTEDLNLIMHDIWYITCLRHKIMMDTTLYELVMKAAIEFQNEDLAKKVWNDRGKFRTTVPFLKMDQRIRIAKDQKFAHLMVEFFTKQGKYSDAIAIILSSKNRFNWTYSMVRNLHKALEEIEDRNSVEILLDVVNKKSHAKALKWEEQELNM.

Residues 1-76 (MYMARCGPKN…REFSNTLKER (76 aa)) constitute a mitochondrion transit peptide. Composition is skewed to polar residues over residues 80 to 94 (TKSV…NSIA) and 102 to 112 (NVNVTKTSSVP). The tract at residues 80–117 (TKSVNSDGHQSNSIAPISEDSRNVNVTKTSSVPNEEKS) is disordered. PPR repeat units follow at residues 319-353 (NKQN…STKH) and 356-390 (DICT…NIKP).

It belongs to the CCM1 family. Binds to mitochondrial small subunit 15S rRNA.

It is found in the mitochondrion. Regulates mitochondrial small subunit maturation by controlling 15S rRNA 5'-end processing. Localizes to the 5' precursor of the 15S rRNA in a position that is subsequently occupied by mS47 in the mature yeast mtSSU. Uses structure and sequence-specific RNA recognition, binding to a single-stranded region of the precursor and specifically recognizing bases -6 to -1. The exchange of Ccm1 for mS47 is coupled to the irreversible removal of precursor rRNA that is accompanied by conformational changes of the mitoribosomal proteins uS5m and mS26. These conformational changes signal completion of 5'-end rRNA processing through protection of the mature 5'-end of the 15S rRNA and stabilization of mS47. The removal of the 5' precursor together with the dissociation of Ccm1 may be catalyzed by the 5'-3' exoribonuclease Pet127. Involved in the specific removal of group I introns in mitochondrial encoded transcripts. The chain is Mitochondrial 15S rRNA processing factor CCM1 from Saccharomyces cerevisiae (strain ATCC 204508 / S288c) (Baker's yeast).